A 282-amino-acid chain; its full sequence is Ribosomal RNA small subunit methyltransferase A (282 aa).

The tract at residues 1–21 is disordered; that stretch reads MPDFPKEHATPMSNRPPAHQA. S-adenosyl-L-methionine is bound by residues N28, L30, G55, E76, D101, and N126.

Belongs to the class I-like SAM-binding methyltransferase superfamily. rRNA adenine N(6)-methyltransferase family. RsmA subfamily.

The protein localises to the cytoplasm. It carries out the reaction adenosine(1518)/adenosine(1519) in 16S rRNA + 4 S-adenosyl-L-methionine = N(6)-dimethyladenosine(1518)/N(6)-dimethyladenosine(1519) in 16S rRNA + 4 S-adenosyl-L-homocysteine + 4 H(+). Specifically dimethylates two adjacent adenosines (A1518 and A1519) in the loop of a conserved hairpin near the 3'-end of 16S rRNA in the 30S particle. May play a critical role in biogenesis of 30S subunits. The polypeptide is Ribosomal RNA small subunit methyltransferase A (Chromohalobacter salexigens (strain ATCC BAA-138 / DSM 3043 / CIP 106854 / NCIMB 13768 / 1H11)).